We begin with the raw amino-acid sequence, 104 residues long: Flagellar hook-basal body complex protein FliE (104 aa).

It belongs to the FliE family.

The protein localises to the bacterial flagellum basal body. The polypeptide is Flagellar hook-basal body complex protein FliE (Escherichia coli O139:H28 (strain E24377A / ETEC)).